The primary structure comprises 327 residues: o-succinylbenzoate synthase (327 aa).

The Proton donor role is filled by Lys-110. Mg(2+)-binding residues include Asp-138, Glu-165, and Asp-188. Lys-212 acts as the Proton acceptor in catalysis.

Belongs to the mandelate racemase/muconate lactonizing enzyme family. MenC type 1 subfamily. Requires a divalent metal cation as cofactor.

The catalysed reaction is (1R,6R)-6-hydroxy-2-succinyl-cyclohexa-2,4-diene-1-carboxylate = 2-succinylbenzoate + H2O. It functions in the pathway quinol/quinone metabolism; 1,4-dihydroxy-2-naphthoate biosynthesis; 1,4-dihydroxy-2-naphthoate from chorismate: step 4/7. It participates in quinol/quinone metabolism; menaquinone biosynthesis. Its function is as follows. Converts 2-succinyl-6-hydroxy-2,4-cyclohexadiene-1-carboxylate (SHCHC) to 2-succinylbenzoate (OSB). The polypeptide is o-succinylbenzoate synthase (Mycobacterium ulcerans (strain Agy99)).